The sequence spans 955 residues: Thyroid hormone receptor-associated protein 3 (955 aa).

Residues 1–94 (MSKTNKSKSG…YFRGRNRGFY (94 aa)) are disordered. Ser-2 carries the N-acetylserine modification. A required for mRNA splicing activation region spans residues 2–190 (SKTNKSKSGS…KSSSKDSRPS (189 aa)). A compositionally biased stretch (basic residues) spans 14-51 (SRSRSASRSRSRSFSKSRSRSRSLSRSRKRRLSSRSRS). At Arg-17 the chain carries Dimethylated arginine. Positions 58 to 75 (HNRERNHPRVYQNRDFRG) are enriched in basic and acidic residues. The residue at position 66 (Arg-66) is an Asymmetric dimethylarginine. The segment covering 82–94 (RPYYFRGRNRGFY) has biased composition (low complexity). Residues Arg-101 and Arg-108 each carry the asymmetric dimethylarginine modification. Residues 117–559 (AYSPRRGRSR…AKGDFPTGKS (443 aa)) are disordered. The segment covering 121–143 (RRGRSRSRSPKRRSPSPRSRSHS) has biased composition (basic residues). The span at 144–155 (RNSDKSSSDRSR) shows a compositional bias: basic and acidic residues. Residues 157–166 (SSSSRSSSNH) are compositionally biased toward low complexity. Residues 167–188 (SRVESSKRKSAKEKKSSSKDSR) show a composition bias toward basic and acidic residues. Lys-202 participates in a covalent cross-link: Glycyl lysine isopeptide (Lys-Gly) (interchain with G-Cter in SUMO1); alternate. Lys-202 is covalently cross-linked (Glycyl lysine isopeptide (Lys-Gly) (interchain with G-Cter in SUMO2); alternate). A compositionally biased stretch (polar residues) spans 204–220 (QTFSGGTSQDTKASESS). Lys-215 is covalently cross-linked (Glycyl lysine isopeptide (Lys-Gly) (interchain with G-Cter in SUMO2)). Ser-220 is modified (phosphoserine). Lys-221 is covalently cross-linked (Glycyl lysine isopeptide (Lys-Gly) (interchain with G-Cter in SUMO2); alternate). Lys-221 bears the N6-acetyllysine; alternate mark. Residues Ser-232, Ser-237, Ser-240, Ser-243, and Ser-248 each carry the phosphoserine modification. Residue Lys-252 forms a Glycyl lysine isopeptide (Lys-Gly) (interchain with G-Cter in SUMO2); alternate linkage. An N6-methyllysine; alternate modification is found at Lys-252. A phosphoserine mark is found at Ser-253 and Ser-257. Over residues 266 to 276 (RPSPVPKPSPP) the composition is skewed to pro residues. Residues 282 to 300 (QMGSTLPSGAGYQSGTHQG) are compositionally biased toward polar residues. Residues 305–331 (GSGSLSPSKKSPVGKSPPSTGSTYGSS) show a composition bias toward low complexity. Residues Ser-315, Ser-320, and Ser-323 each carry the phosphoserine modification. Residue Thr-324 is modified to Phosphothreonine. The residue at position 326 (Ser-326) is a Phosphoserine. Position 328 is a phosphotyrosine (Tyr-328). Residue Lys-333 forms a Glycyl lysine isopeptide (Lys-Gly) (interchain with G-Cter in SUMO2) linkage. Ser-339 bears the Phosphoserine mark. A Glycyl lysine isopeptide (Lys-Gly) (interchain with G-Cter in SUMO2); alternate cross-link involves residue Lys-346. Lys-346 carries the post-translational modification N6-acetyllysine; alternate. Basic and acidic residues predominate over residues 347-377 (RYLEEQKTENGKDKEQKQTNTDKEKIKEKGS). Residues Lys-353 and Lys-375 each participate in a glycyl lysine isopeptide (Lys-Gly) (interchain with G-Cter in SUMO2) cross-link. Residues 359–955 (DKEQKQTNTD…EKDNIQPTTE (597 aa)) are required for mRNA decay activity. Ser-377 and Ser-379 each carry phosphoserine. Residue Lys-387 forms a Glycyl lysine isopeptide (Lys-Gly) (interchain with G-Cter in SUMO1); alternate linkage. Lys-387 participates in a covalent cross-link: Glycyl lysine isopeptide (Lys-Gly) (interchain with G-Cter in SUMO2); alternate. Residues Lys-389 and Lys-396 each participate in a glycyl lysine isopeptide (Lys-Gly) (interchain with G-Cter in SUMO2) cross-link. Thr-397 carries the post-translational modification Phosphothreonine. A Glycyl lysine isopeptide (Lys-Gly) (interchain with G-Cter in SUMO2) cross-link involves residue Lys-401. Phosphoserine occurs at positions 406 and 408. The span at 414–452 (LRDDFEKKMADFHKEEMDDQDKDKAKGRKESEFDDEPKF) shows a compositional bias: basic and acidic residues. Residues Lys-421 and Lys-427 each participate in a glycyl lysine isopeptide (Lys-Gly) (interchain with G-Cter in SUMO2) cross-link. Ser-444 bears the Phosphoserine mark. Residue Lys-451 forms a Glycyl lysine isopeptide (Lys-Gly) (interchain with G-Cter in SUMO1); alternate linkage. Glycyl lysine isopeptide (Lys-Gly) (interchain with G-Cter in SUMO2); alternate cross-links involve residues Lys-451 and Lys-455. Lys-455 carries the post-translational modification N6-acetyllysine; alternate. Residues Lys-461 and Lys-467 each participate in a glycyl lysine isopeptide (Lys-Gly) (interchain with G-Cter in SUMO2) cross-link. Ser-468 is modified (phosphoserine). Glycyl lysine isopeptide (Lys-Gly) (interchain with G-Cter in SUMO2); alternate cross-links involve residues Lys-470 and Lys-481. An N6-acetyllysine; alternate mark is found at Lys-470 and Lys-481. Lys-486 participates in a covalent cross-link: Glycyl lysine isopeptide (Lys-Gly) (interchain with G-Cter in SUMO2). Positions 495–521 (FPERSKKEDRGKRSEGGHRGFVPEKNF) are enriched in basic and acidic residues. At Lys-519 the chain carries N6-acetyllysine. Lys-527 is covalently cross-linked (Glycyl lysine isopeptide (Lys-Gly) (interchain with G-Cter in SUMO2); alternate). Lys-527 carries the post-translational modification N6-acetyllysine; alternate. Ser-535 bears the Phosphoserine mark. Positions 540 to 550 (KTSESRDKLGA) are enriched in basic and acidic residues. Lys-551 is covalently cross-linked (Glycyl lysine isopeptide (Lys-Gly) (interchain with G-Cter in SUMO2)). 552–559 (GDFPTGKS) provides a ligand contact to ATP. Residue Lys-558 forms a Glycyl lysine isopeptide (Lys-Gly) (interchain with G-Cter in SUMO2); alternate linkage. Lys-558 carries the N6-acetyllysine; alternate modification. A phosphoserine mark is found at Ser-560, Ser-562, and Ser-575. A Glycyl lysine isopeptide (Lys-Gly) (interchain with G-Cter in SUMO2) cross-link involves residue Lys-602. Phosphoserine occurs at positions 619, 622, 672, 682, and 684. A compositionally biased stretch (basic and acidic residues) spans 663-680 (EQEAAKNKKSPEIHRRID). A disordered region spans residues 663–955 (EQEAAKNKKS…EKDNIQPTTE (293 aa)). The span at 691-761 (LAHDEMKSPR…RSAEKTEKTH (71 aa)) shows a compositional bias: basic and acidic residues. Lys-697 is covalently cross-linked (Glycyl lysine isopeptide (Lys-Gly) (interchain with G-Cter in SUMO2)). Position 698 is a phosphoserine (Ser-698). Residues Lys-705, Lys-709, Lys-711, Lys-756, and Lys-759 each participate in a glycyl lysine isopeptide (Lys-Gly) (interchain with G-Cter in SUMO2) cross-link. Residues 762–775 (KGSKKQKKHRRARD) show a composition bias toward basic residues. Residues 779–789 (SSSSSSQSSHS) are compositionally biased toward low complexity. N6-acetyllysine is present on Lys-811. Arg-845 is modified (asymmetric dimethylarginine). The segment covering 848–859 (YSGNNNNNSNND) has biased composition (low complexity). Position 874 is a phosphothreonine (Thr-874). Glycyl lysine isopeptide (Lys-Gly) (interchain with G-Cter in SUMO2) cross-links involve residues Lys-876 and Lys-879. Over residues 881–895 (YLHDDREGEGSDKWV) the composition is skewed to basic and acidic residues. Residues Ser-928 and Ser-939 each carry the phosphoserine modification. Residues 930–940 (EEGEIEDDESG) are compositionally biased toward acidic residues.

It belongs to the BCLAF1/THRAP3 family. In terms of assembly, associated with the large multiprotein complex TRAP (Mediator complex-like). Interacts with SFPQ; the interaction is dependent on SFPQ phosphorylation at 'Thr-687' and inhibits binding of SFPQ to an ESS1 exonic splicing silencer element-containing RNA. Interacts with NXF1. Component of the SNARP complex which consists at least of SNIP1, SNW1, THRAP3, BCLAF1 and PNN. Associated with spliced mRNP complexes. Interacts with HELZ2 and PPARG. Interacts with CLOCK and BMAL1. Component of a MACOM-like complex, named WTAP complex, composed of WTAP, ZC3H13, CBLL1, KIAA1429, RBM15, BCLAF1 and THRAP3. ADP-ribosylation during genotoxic stress promotes accumulation in nuclear speckles. As to expression, ubiquitous.

The protein resides in the nucleus. Its subcellular location is the nucleoplasm. It localises to the nucleus speckle. Its function is as follows. Involved in pre-mRNA splicing. Remains associated with spliced mRNA after splicing which probably involves interactions with the exon junction complex (EJC). Can trigger mRNA decay which seems to be independent of nonsense-mediated decay involving premature stop codons (PTC) recognition. May be involved in nuclear mRNA decay. Involved in regulation of signal-induced alternative splicing. During splicing of PTPRC/CD45 is proposed to sequester phosphorylated SFPQ from PTPRC/CD45 pre-mRNA in resting T-cells. Involved in cyclin-D1/CCND1 mRNA stability probably by acting as component of the SNARP complex which associates with both the 3'end of the CCND1 gene and its mRNA. Involved in response to DNA damage. Is excluced from DNA damage sites in a manner that parallels transcription inhibition; the function may involve the SNARP complex. Initially thought to play a role in transcriptional coactivation through its association with the TRAP complex; however, it is not regarded as a stable Mediator complex subunit. Cooperatively with HELZ2, enhances the transcriptional activation mediated by PPARG, maybe through the stabilization of the PPARG binding to DNA in presence of ligand. May play a role in the terminal stage of adipocyte differentiation. Plays a role in the positive regulation of the circadian clock. Acts as a coactivator of the CLOCK-BMAL1 heterodimer and promotes its transcriptional activator activity and binding to circadian target genes. In Homo sapiens (Human), this protein is Thyroid hormone receptor-associated protein 3.